The primary structure comprises 213 residues: Putative cytochrome c-type biogenesis protein HI_1454 (213 aa).

Transmembrane regions (helical) follow at residues 15 to 35 (GLASFLSPCIFPIIPIYFGIL), 46 to 66 (FLFILGLSLTFVSLGFSFGFL), 77 to 97 (IIAGVIVIILGIHQLGIFKIG), 118 to 138 (AFVLGLTFSLGWTPCIGPILA), 154 to 174 (ASMMFVYVLGLATPFVLFSFF), and 192 to 212 (FKIGGGILIIVMGILLITNNF).

It belongs to the DsbD family.

The protein localises to the cell membrane. Could be involved in cytochrome c synthesis. The chain is Putative cytochrome c-type biogenesis protein HI_1454 from Haemophilus influenzae (strain ATCC 51907 / DSM 11121 / KW20 / Rd).